The chain runs to 179 residues: Repressor of phase 1 flagellin gene (179 aa).

Transcriptional repressor of the FliC phase-1 flagellin. This chain is Repressor of phase 1 flagellin gene (fljA), found in Salmonella abortus-equi.